The chain runs to 210 residues: Ras-related protein Rab-8 (210 aa).

Residue 15 to 22 coordinates GTP; the sequence is GDSGVGKT. Positions 37-45 match the Effector region motif; sequence FISTIGIDF. GTP contacts are provided by residues 63–67 and 121–124; these read DTAGQ and NKCD. Cys-207 is subject to Cysteine methyl ester. Cys-207 is lipidated: S-geranylgeranyl cysteine. A propeptide spans 208-210 (removed in mature form); the sequence is SLL.

It belongs to the small GTPase superfamily. Rab family.

Its subcellular location is the cell membrane. The chain is Ras-related protein Rab-8 from Diplobatis ommata (Ocellated electric ray).